We begin with the raw amino-acid sequence, 121 residues long: Large ribosomal subunit protein bL19 (121 aa).

The protein belongs to the bacterial ribosomal protein bL19 family.

In terms of biological role, this protein is located at the 30S-50S ribosomal subunit interface and may play a role in the structure and function of the aminoacyl-tRNA binding site. The protein is Large ribosomal subunit protein bL19 of Chloroherpeton thalassium (strain ATCC 35110 / GB-78).